The primary structure comprises 605 residues: MVRHQPLQYYEPQLCLSCLTGIYGCRWKRYQRSHDDTTPWERLWFLLLTFTFGLTLTWLYFWWEVHNDYDEFNWYLYNRMGYWSDWPVPILVTTAAAFAYIAGLLVLALCHIAVGQQMNLHWLHKIGLVVILASTVVAMSAVAQLWEDEWEVLLISLQGTAPFLHVGAVAAVTMLSWIVAGQFARAERTSSQVTILCTFFTVVFALYLAPLTISSPCIMEKKDLGPKPALIGHRGAPMLAPEHTLMSFRKALEQKLYGLQADITISLDGVPFLMHDTTLRRTTNVEEEFPELARRPASMLNWTTLQRLNAGQWFLKTDPFWTASSLSPSDHREAQNQSICSLAELLELAKGNATLLLNLRDPPREHPYRSSFINVTLEAVLHSGFPQHQVMWLPSRQRPLVRKVAPGFQQTSGSKEAVASLRRGHIQRLNLRYTQVSRQELRDYASWNLSVNLYTVNAPWLFSLLWCAGVPSVTSDNSHALSQVPSPLWIMPPDEYCLMWVTADLVSFTLIVGIFVLQKWRLGGIRSYNPEQIMLSAAVRRTSRDVSIMKEKLIFSEISDGVEVSDVLSVCSDNSYDTYANSTATPVGPRGGGSHTKTLIERSGR.

Over 1–42 (MVRHQPLQYYEPQLCLSCLTGIYGCRWKRYQRSHDDTTPWER) the chain is Cytoplasmic. Disulfide bonds link Cys-15–Cys-18 and Cys-25–Cys-571. Residues 43–63 (LWFLLLTFTFGLTLTWLYFWW) traverse the membrane as a helical segment. Residues 64–89 (EVHNDYDEFNWYLYNRMGYWSDWPVP) lie on the Extracellular side of the membrane. A helical membrane pass occupies residues 90–110 (ILVTTAAAFAYIAGLLVLALC). The Cytoplasmic segment spans residues 111-125 (HIAVGQQMNLHWLHK). The chain crosses the membrane as a helical span at residues 126 to 146 (IGLVVILASTVVAMSAVAQLW). Over 147–160 (EDEWEVLLISLQGT) the chain is Extracellular. The chain crosses the membrane as a helical span at residues 161–181 (APFLHVGAVAAVTMLSWIVAG). Residues 182–192 (QFARAERTSSQ) lie on the Cytoplasmic side of the membrane. A helical membrane pass occupies residues 193–213 (VTILCTFFTVVFALYLAPLTI). The Extracellular portion of the chain corresponds to 214–496 (SSPCIMEKKD…PLWIMPPDEY (283 aa)). The GP-PDE domain occupies 228–485 (PALIGHRGAP…DNSHALSQVP (258 aa)). N-linked (GlcNAc...) asparagine glycans are attached at residues Asn-301, Asn-336, Asn-352, Asn-374, and Asn-448. A helical membrane pass occupies residues 497–517 (CLMWVTADLVSFTLIVGIFVL). The Cytoplasmic portion of the chain corresponds to 518-605 (QKWRLGGIRS…TKTLIERSGR (88 aa)). The disordered stretch occupies residues 582–605 (STATPVGPRGGGSHTKTLIERSGR).

The protein belongs to the glycerophosphoryl diester phosphodiesterase family. In terms of assembly, interacts with PRDX1; forms a mixed-disulfide with PRDX1, leading to disrupt intramolecular disulfide bond between Cys-25 and Cys-571. In terms of processing, intramolecular disulfide bond between Cys-25 and Cys-571 is reduced by PRDX1.

It localises to the endomembrane system. The protein localises to the cytoplasm. The protein resides in the perinuclear region. It is found in the cell projection. Its subcellular location is the growth cone. The catalysed reaction is a 1,2-diacyl-sn-glycero-3-phospho-(1D-myo-inositol-4,5-bisphosphate) + H2O = 1D-myo-inositol 1,4,5-trisphosphate + a 1,2-diacyl-sn-glycerol + H(+). It catalyses the reaction sn-glycerol 3-phosphocholine + H2O = sn-glycerol 3-phosphate + choline + H(+). Its function is as follows. Glycerophosphodiester phosphodiesterase that promotes neurite formation and drives spinal motor neuron differentiation. Mediates the cleavage of glycosylphosphatidylinositol (GPI) anchor of target proteins: removes the GPI-anchor of RECK, leading to release RECK from the plasma membrane. May contribute to the osmotic regulation of cellular glycerophosphocholine. The sequence is that of Glycerophosphodiester phosphodiesterase domain-containing protein 5 from Homo sapiens (Human).